Here is a 411-residue protein sequence, read N- to C-terminus: Glucose-1-phosphate adenylyltransferase (411 aa).

Residues G161, 176-177 (EK), and S195 each bind alpha-D-glucose 1-phosphate.

It belongs to the bacterial/plant glucose-1-phosphate adenylyltransferase family. As to quaternary structure, homotetramer.

The catalysed reaction is alpha-D-glucose 1-phosphate + ATP + H(+) = ADP-alpha-D-glucose + diphosphate. It participates in glycan biosynthesis; glycogen biosynthesis. Functionally, involved in the biosynthesis of ADP-glucose, a building block required for the elongation reactions to produce glycogen. Catalyzes the reaction between ATP and alpha-D-glucose 1-phosphate (G1P) to produce pyrophosphate and ADP-Glc. The polypeptide is Glucose-1-phosphate adenylyltransferase (Anaeromyxobacter sp. (strain Fw109-5)).